Here is a 206-residue protein sequence, read N- to C-terminus: Small ribosomal subunit protein eS8 (206 aa).

A disordered region spans residues 1-37 (MGISRDSRHKRSATGAKRAQFRKKRKFELGRQPANTK).

It belongs to the eukaryotic ribosomal protein eS8 family. As to quaternary structure, component of the small ribosomal subunit. Mature ribosomes consist of a small (40S) and a large (60S) subunit. The 40S subunit contains about 32 different proteins and 1 molecule of RNA (18S). The 60S subunit contains 45 different proteins and 3 molecules of RNA (25S, 5.8S and 5S).

The protein resides in the cytoplasm. Functionally, component of the ribosome, a large ribonucleoprotein complex responsible for the synthesis of proteins in the cell. The small ribosomal subunit (SSU) binds messenger RNAs (mRNAs) and translates the encoded message by selecting cognate aminoacyl-transfer RNA (tRNA) molecules. The large subunit (LSU) contains the ribosomal catalytic site termed the peptidyl transferase center (PTC), which catalyzes the formation of peptide bonds, thereby polymerizing the amino acids delivered by tRNAs into a polypeptide chain. The nascent polypeptides leave the ribosome through a tunnel in the LSU and interact with protein factors that function in enzymatic processing, targeting, and the membrane insertion of nascent chains at the exit of the ribosomal tunnel. In Candida albicans (strain SC5314 / ATCC MYA-2876) (Yeast), this protein is Small ribosomal subunit protein eS8 (RPS8A).